The primary structure comprises 65 residues: MTTPPERPETSVDRKLLEILVCPVTKGPLEFDAARQELISRGAKLAYPIRDGIPIMLPEEARKLG.

The protein belongs to the UPF0434 family.

This Rhodopseudomonas palustris (strain HaA2) protein is UPF0434 protein RPB_0294.